A 394-amino-acid polypeptide reads, in one-letter code: Flap endonuclease 1 (394 aa).

The segment at 1–104 (MGIKQLFSII…GELAKRFQRK (104 aa)) is N-domain. Asp34 is a Mg(2+) binding site. Arg47 and Arg70 together coordinate DNA. Asp86, Glu158, Glu160, Asp179, and Asp181 together coordinate Mg(2+). The interval 122 to 253 (DVEKFSRRTV…STALKLIREH (132 aa)) is I-domain. Glu158 contacts DNA. Positions 231 and 233 each coordinate DNA. Asp233 contributes to the Mg(2+) binding site. Positions 341 to 349 (QQARIEGFF) are interaction with PCNA. Residues 356 to 383 (EEEKKAHKRKLEEQAEQKRKKVKEEKKE) are compositionally biased toward basic and acidic residues. The interval 356-394 (EEEKKAHKRKLEEQAEQKRKKVKEEKKEKAKLKAKPRGA) is disordered. The segment covering 384–394 (KAKLKAKPRGA) has biased composition (basic residues).

The protein belongs to the XPG/RAD2 endonuclease family. FEN1 subfamily. In terms of assembly, interacts with PCNA. Three molecules of FEN1 bind to one PCNA trimer with each molecule binding to one PCNA monomer. PCNA stimulates the nuclease activity without altering cleavage specificity. Requires Mg(2+) as cofactor. Post-translationally, phosphorylated. Phosphorylation upon DNA damage induces relocalization to the nuclear plasma.

The protein localises to the nucleus. It is found in the nucleolus. Its subcellular location is the nucleoplasm. It localises to the mitochondrion. Its function is as follows. Structure-specific nuclease with 5'-flap endonuclease and 5'-3' exonuclease activities involved in DNA replication and repair. During DNA replication, cleaves the 5'-overhanging flap structure that is generated by displacement synthesis when DNA polymerase encounters the 5'-end of a downstream Okazaki fragment. It enters the flap from the 5'-end and then tracks to cleave the flap base, leaving a nick for ligation. Also involved in the long patch base excision repair (LP-BER) pathway, by cleaving within the apurinic/apyrimidinic (AP) site-terminated flap. Acts as a genome stabilization factor that prevents flaps from equilibrating into structures that lead to duplications and deletions. Also possesses 5'-3' exonuclease activity on nicked or gapped double-stranded DNA, and exhibits RNase H activity. Also involved in replication and repair of rDNA and in repairing mitochondrial DNA. This is Flap endonuclease 1 from Sordaria macrospora (strain ATCC MYA-333 / DSM 997 / K(L3346) / K-hell).